Consider the following 138-residue polypeptide: ATP synthase epsilon chain (138 aa).

It belongs to the ATPase epsilon chain family. As to quaternary structure, F-type ATPases have 2 components, CF(1) - the catalytic core - and CF(0) - the membrane proton channel. CF(1) has five subunits: alpha(3), beta(3), gamma(1), delta(1), epsilon(1). CF(0) has three main subunits: a, b and c.

Its subcellular location is the cell inner membrane. Produces ATP from ADP in the presence of a proton gradient across the membrane. The protein is ATP synthase epsilon chain of Blochmanniella floridana.